Here is a 206-residue protein sequence, read N- to C-terminus: Pyridoxine/pyridoxamine 5'-phosphate oxidase (206 aa).

Residues 53–58 (RMVLLK), 68–69 (YT), Lys-75, and Gln-97 each bind FMN. Lys-58 is a substrate binding site. Substrate-binding residues include Tyr-115, Arg-119, and Ser-123. FMN-binding positions include 132–133 (QS) and Trp-177. 183 to 185 (RLH) provides a ligand contact to substrate. FMN is bound at residue Arg-187.

The protein belongs to the pyridoxamine 5'-phosphate oxidase family. As to quaternary structure, homodimer. Requires FMN as cofactor.

It catalyses the reaction pyridoxamine 5'-phosphate + O2 + H2O = pyridoxal 5'-phosphate + H2O2 + NH4(+). The catalysed reaction is pyridoxine 5'-phosphate + O2 = pyridoxal 5'-phosphate + H2O2. It functions in the pathway cofactor metabolism; pyridoxal 5'-phosphate salvage; pyridoxal 5'-phosphate from pyridoxamine 5'-phosphate: step 1/1. The protein operates within cofactor metabolism; pyridoxal 5'-phosphate salvage; pyridoxal 5'-phosphate from pyridoxine 5'-phosphate: step 1/1. In terms of biological role, catalyzes the oxidation of either pyridoxine 5'-phosphate (PNP) or pyridoxamine 5'-phosphate (PMP) into pyridoxal 5'-phosphate (PLP). This is Pyridoxine/pyridoxamine 5'-phosphate oxidase from Rhizobium meliloti (strain 1021) (Ensifer meliloti).